Consider the following 167-residue polypeptide: Phospholipase A2 heteromtoxin (167 aa).

Ca(2+) contacts are provided by Trp38, Gly40, and Gly42. 5 disulfide bridges follow: Cys39/Cys61, Cys60/Cys99, Cys67/Cys92, Cys90/Cys127, and Cys132/Cys144. His64 is an active-site residue. A Ca(2+)-binding site is contributed by Asp65. Positions 136–140 (GRSAR) are excised as a propeptide.

The protein belongs to the phospholipase A2 family. Group III subfamily. As to quaternary structure, heterodimer composed of a large and a small subunits; disulfide-linked. Requires Ca(2+) as cofactor. Expressed by the venom gland.

It is found in the secreted. The enzyme catalyses a 1,2-diacyl-sn-glycero-3-phosphocholine + H2O = a 1-acyl-sn-glycero-3-phosphocholine + a fatty acid + H(+). Phospholipase toxin, which catalyzes the calcium-dependent hydrolysis of the 2-acyl groups in 3-sn-phosphoglycerides. Inhibits both skeletal (RYR1) and cardiac (RYR2) ryanodine receptors (calcium release channels). Probably blocks ryanodine receptors by generating a lipid product. In Heterometrus laoticus (Thai giant scorpion), this protein is Phospholipase A2 heteromtoxin.